The primary structure comprises 182 residues: UPF0690 protein C1orf52 homolog (182 aa).

A disordered region spans residues 1-61 (MAAEEKDPLS…AEKRLPGPDE (61 aa)). Residues 23–32 (SDEEDNSEPE) show a composition bias toward acidic residues. Over residues 51–61 (KAEKRLPGPDE) the composition is skewed to basic and acidic residues. Threonine 67 is subject to Phosphothreonine. Residue tyrosine 132 is modified to Phosphotyrosine. The tract at residues 132 to 182 (YEDNGDDAPQNAKKARLLPEGEETVESDDEKDEHTSKKRKIELGEPTKKKK) is disordered. The span at 151–162 (EGEETVESDDEK) shows a compositional bias: acidic residues. Residue serine 158 is modified to Phosphoserine. Residues 172-182 (IELGEPTKKKK) are compositionally biased toward basic and acidic residues.

It belongs to the UPF0690 family.

In Bos taurus (Bovine), this protein is UPF0690 protein C1orf52 homolog.